The primary structure comprises 81 residues: Photosystem I iron-sulfur center (81 aa).

4Fe-4S ferredoxin-type domains lie at serine 2–tryptophan 31 and isoleucine 39–tyrosine 68. Residues cysteine 11, cysteine 14, cysteine 17, cysteine 21, cysteine 48, cysteine 51, cysteine 54, and cysteine 58 each contribute to the [4Fe-4S] cluster site.

The eukaryotic PSI reaction center is composed of at least 11 subunits. [4Fe-4S] cluster is required as a cofactor.

It localises to the plastid. The protein resides in the chloroplast thylakoid membrane. It carries out the reaction reduced [plastocyanin] + hnu + oxidized [2Fe-2S]-[ferredoxin] = oxidized [plastocyanin] + reduced [2Fe-2S]-[ferredoxin]. In terms of biological role, apoprotein for the two 4Fe-4S centers FA and FB of photosystem I (PSI); essential for photochemical activity. FB is the terminal electron acceptor of PSI, donating electrons to ferredoxin. The C-terminus interacts with PsaA/B/D and helps assemble the protein into the PSI complex. Required for binding of PsaD and PsaE to PSI. PSI is a plastocyanin-ferredoxin oxidoreductase, converting photonic excitation into a charge separation, which transfers an electron from the donor P700 chlorophyll pair to the spectroscopically characterized acceptors A0, A1, FX, FA and FB in turn. The sequence is that of Photosystem I iron-sulfur center from Chloranthus spicatus (Chulantree).